The sequence spans 149 residues: Protein K7 (149 aa).

It belongs to the orthopoxvirus OPG044 family. As to quaternary structure, interacts with DDX3; this interaction inhibits DDX3 and suppresses DDX3-mediated IFN-beta promoter induction. Interacts with TRAF6 and IRAK2; these interactions suppress TLR-dependent NF-KappaB activation.

The protein resides in the host cytoplasm. In terms of biological role, virulence factor that affects the acute immune response to infection. Bcl-2-like protein which, through its interaction with the DEAD box RNA helicase DDX3X/DDX3, prevents TBK1/IKKepsilon-mediated IRF3 activation. Contributes to virulence by binding to the host TRAF6 and IRAK2 and preventing host NF-kappa-B activation. In Homo sapiens (Human), this protein is Protein K7 (OPG044).